The primary structure comprises 98 residues: Co-chaperonin GroES 4 (98 aa).

Belongs to the GroES chaperonin family. Heptamer of 7 subunits arranged in a ring. Interacts with the chaperonin GroEL.

It localises to the cytoplasm. In terms of biological role, together with the chaperonin GroEL, plays an essential role in assisting protein folding. The GroEL-GroES system forms a nano-cage that allows encapsulation of the non-native substrate proteins and provides a physical environment optimized to promote and accelerate protein folding. GroES binds to the apical surface of the GroEL ring, thereby capping the opening of the GroEL channel. This chain is Co-chaperonin GroES 4, found in Mesorhizobium japonicum (strain LMG 29417 / CECT 9101 / MAFF 303099) (Mesorhizobium loti (strain MAFF 303099)).